The chain runs to 653 residues: 1-deoxy-D-xylulose-5-phosphate synthase (653 aa).

Residues His-86 and 127-129 (GHS) each bind thiamine diphosphate. Residue Asp-158 participates in Mg(2+) binding. Residues 159 to 160 (GA), Asn-187, and Phe-294 each bind thiamine diphosphate. Residue Asn-187 coordinates Mg(2+). Residues 309–324 (KLEKTTSEPPPKKEPR) are compositionally biased toward basic and acidic residues. Residues 309-343 (KLEKTTSEPPPKKEPRSPNAATAEPEAQPKPQPKP) form a disordered region. Glu-395 provides a ligand contact to thiamine diphosphate.

It belongs to the transketolase family. DXPS subfamily. As to quaternary structure, homodimer. The cofactor is Mg(2+). Requires thiamine diphosphate as cofactor.

The catalysed reaction is D-glyceraldehyde 3-phosphate + pyruvate + H(+) = 1-deoxy-D-xylulose 5-phosphate + CO2. It participates in metabolic intermediate biosynthesis; 1-deoxy-D-xylulose 5-phosphate biosynthesis; 1-deoxy-D-xylulose 5-phosphate from D-glyceraldehyde 3-phosphate and pyruvate: step 1/1. Functionally, catalyzes the acyloin condensation reaction between C atoms 2 and 3 of pyruvate and glyceraldehyde 3-phosphate to yield 1-deoxy-D-xylulose-5-phosphate (DXP). The chain is 1-deoxy-D-xylulose-5-phosphate synthase from Chromohalobacter salexigens (strain ATCC BAA-138 / DSM 3043 / CIP 106854 / NCIMB 13768 / 1H11).